A 334-amino-acid polypeptide reads, in one-letter code: Methionyl-tRNA formyltransferase (334 aa).

(6S)-5,6,7,8-tetrahydrofolate is bound at residue 111–114; sequence SILP.

The protein belongs to the Fmt family.

The catalysed reaction is L-methionyl-tRNA(fMet) + (6R)-10-formyltetrahydrofolate = N-formyl-L-methionyl-tRNA(fMet) + (6S)-5,6,7,8-tetrahydrofolate + H(+). Its function is as follows. Attaches a formyl group to the free amino group of methionyl-tRNA(fMet). The formyl group appears to play a dual role in the initiator identity of N-formylmethionyl-tRNA by promoting its recognition by IF2 and preventing the misappropriation of this tRNA by the elongation apparatus. The polypeptide is Methionyl-tRNA formyltransferase (Gloeothece citriformis (strain PCC 7424) (Cyanothece sp. (strain PCC 7424))).